Here is a 469-residue protein sequence, read N- to C-terminus: Deoxyribodipyrimidine photo-lyase (469 aa).

The Photolyase/cryptochrome alpha/beta domain maps to 1–133 (MRLVWFRRDL…IWSAFDDKCV (133 aa)). Residue glutamate 107 coordinates (6R)-5,10-methylene-5,6,7,8-tetrahydrofolate.

This sequence belongs to the DNA photolyase class-1 family. In terms of assembly, monomer. FAD is required as a cofactor. Requires (6R)-5,10-methylene-5,6,7,8-tetrahydrofolate as cofactor.

It carries out the reaction cyclobutadipyrimidine (in DNA) = 2 pyrimidine residues (in DNA).. Its function is as follows. Involved in repair of UV radiation-induced DNA damage. Catalyzes the light-dependent monomerization (300-600 nm) of cyclobutyl pyrimidine dimers (in cis-syn configuration), which are formed between adjacent bases on the same DNA strand upon exposure to ultraviolet radiation. This chain is Deoxyribodipyrimidine photo-lyase (phrA), found in Vibrio cholerae serotype O1 (strain ATCC 39315 / El Tor Inaba N16961).